The sequence spans 555 residues: Cinnamate beta-D-glucosyltransferase (555 aa).

The active-site Proton acceptor is the His19. His19 provides a ligand contact to an anthocyanidin. The UDP-alpha-D-glucose site is built by Gln344, His359, Trp362, Asn363, Ser364, and Glu367. Gly382 serves as a coordination point for an anthocyanidin. The UDP-alpha-D-glucose site is built by Asp383 and Gln384.

Belongs to the UDP-glycosyltransferase family. Highest expression detected in fruit, with lower levels detected in flower and petiole. Barely detectable in leaf and root.

The catalysed reaction is (E)-cinnamate + UDP-alpha-D-glucose = 1-O-(trans-cinnamoyl)-beta-D-glucose + UDP. In terms of biological role, broad spectrum multifunctional glucosyltransferase. Catalyzes the formation of cinnamic acid and p-coumaric acid glucose esters during fruit ripening. Accepted substrates range from derivatives of cinnamic acid and benzoic acid to heterocyclic and aliphatic compounds, resulting in the formation of O- and S-glucose esters and O-glucosides. May also be involved in detoxification of xenobiotics. The sequence is that of Cinnamate beta-D-glucosyltransferase from Fragaria ananassa (Strawberry).